The chain runs to 134 residues: Small ribosomal subunit protein uS11 (134 aa).

It belongs to the universal ribosomal protein uS11 family. Part of the 30S ribosomal subunit. Interacts with proteins S7 and S18. Binds to IF-3.

Functionally, located on the platform of the 30S subunit, it bridges several disparate RNA helices of the 16S rRNA. Forms part of the Shine-Dalgarno cleft in the 70S ribosome. The polypeptide is Small ribosomal subunit protein uS11 (Delftia acidovorans (strain DSM 14801 / SPH-1)).